Reading from the N-terminus, the 558-residue chain is MGSHMVWFLFLVSFFSVFPAPSESMVRHYKFNVVMKNVTRLCSSKPTVTVNGRYPGPTIYAREDDTLLIKVVNHVKYNVSIHWHGVRQVRTGWADGPAYITQCPIQPGQVYTYNYTLTGQRGTLWWHAHILWLRATVYGALVILPKRGVPYPFPKPDNEKVIVLGEWWKSDTENIINEALKSGLAPNVSDSHMINGHPGPVRNCPSQGYKLSVENGKTYLLRLVNAALNEELFFKVAGHIFTVVEVDAVYVKPFKTDTVLIAPGQTTNVLLTASKSAGKYLVTASPFMDAPIAVDNVTATATVHYSGTLSSSPTILTLPPPQNATSIANNFTNSLRSLNSKKYPALVPTTIDHHLFFTVGLGLNACPTCKAGNGSRVVASINNVTFIMPKTALLPAHYFNTSGVFTTDFPKNPPHVFNYSGGSVTNMATETGTRLYKLPYNATVQLVLQDTGVIAPENHPVHLHGFNFFEVGRGLGNFNSTKDPKNFNLVDPVERNTIGVPSGGWVVIRFRADNPGVWFMHCHLEVHTTWGLKMAFLVENGKGPNQSILPPPKDLPKC.

The signal sequence occupies residues 1–24; that stretch reads MGSHMVWFLFLVSFFSVFPAPSES. 2 Plastocyanin-like domains span residues 32-148 and 158-308; these read NVVM…PKRG and NEKV…YSGT. 2 N-linked (GlcNAc...) asparagine glycosylation sites follow: N37 and N78. Cu cation contacts are provided by H82 and H84. The N-linked (GlcNAc...) asparagine glycan is linked to N114. H127 and H129 together coordinate Cu cation. Residues N187, N296, N323, N330, N373, N383, N400, N418, and N441 are each glycosylated (N-linked (GlcNAc...) asparagine). The Plastocyanin-like 3 domain occupies 408 to 542; the sequence is DFPKNPPHVF…KMAFLVENGK (135 aa). The Cu cation site is built by H459, H462, and H464. The N-linked (GlcNAc...) asparagine glycan is linked to N479. Positions 521, 522, 523, and 527 each coordinate Cu cation. The N-linked (GlcNAc...) asparagine glycan is linked to N545.

The protein belongs to the multicopper oxidase family. Cu cation serves as cofactor. In terms of tissue distribution, ubiquitous, with higher levels in the inflorescence stem.

It localises to the secreted. The protein resides in the extracellular space. Its subcellular location is the apoplast. It catalyses the reaction 4 hydroquinone + O2 = 4 benzosemiquinone + 2 H2O. Lignin degradation and detoxification of lignin-derived products. Required for secondary xylem cell wall lignification. The sequence is that of Laccase-4 (IRX12) from Arabidopsis thaliana (Mouse-ear cress).